We begin with the raw amino-acid sequence, 320 residues long: Elongation factor Ts (320 aa).

Residues 82–85 (TDFV) are involved in Mg(2+) ion dislocation from EF-Tu.

The protein belongs to the EF-Ts family.

It is found in the cytoplasm. In terms of biological role, associates with the EF-Tu.GDP complex and induces the exchange of GDP to GTP. It remains bound to the aminoacyl-tRNA.EF-Tu.GTP complex up to the GTP hydrolysis stage on the ribosome. This Flavobacterium johnsoniae (strain ATCC 17061 / DSM 2064 / JCM 8514 / BCRC 14874 / CCUG 350202 / NBRC 14942 / NCIMB 11054 / UW101) (Cytophaga johnsonae) protein is Elongation factor Ts.